Here is a 146-residue protein sequence, read N- to C-terminus: 3-hydroxyacyl-[acyl-carrier-protein] dehydratase FabZ (146 aa).

The active site involves His-48.

This sequence belongs to the thioester dehydratase family. FabZ subfamily.

It localises to the cytoplasm. The enzyme catalyses a (3R)-hydroxyacyl-[ACP] = a (2E)-enoyl-[ACP] + H2O. Functionally, involved in unsaturated fatty acids biosynthesis. Catalyzes the dehydration of short chain beta-hydroxyacyl-ACPs and long chain saturated and unsaturated beta-hydroxyacyl-ACPs. The polypeptide is 3-hydroxyacyl-[acyl-carrier-protein] dehydratase FabZ (Teredinibacter turnerae (strain ATCC 39867 / T7901)).